The primary structure comprises 528 residues: GMP synthase [glutamine-hydrolyzing] (528 aa).

The Glutamine amidotransferase type-1 domain occupies 13–203 (TVLVVDFGAQ…LYEAAGCRPT (191 aa)). Cys90 acts as the Nucleophile in catalysis. Residues His177 and Glu179 contribute to the active site. Residues 204-402 (WTMVNIVEDQ…LGLPAEMVWR (199 aa)) enclose the GMPS ATP-PPase domain. Position 231–237 (231–237 (SGGVDSA)) interacts with ATP.

In terms of assembly, homodimer.

It catalyses the reaction XMP + L-glutamine + ATP + H2O = GMP + L-glutamate + AMP + diphosphate + 2 H(+). It participates in purine metabolism; GMP biosynthesis; GMP from XMP (L-Gln route): step 1/1. In terms of biological role, catalyzes the synthesis of GMP from XMP. This Thermobifida fusca (strain YX) protein is GMP synthase [glutamine-hydrolyzing].